The chain runs to 93 residues: Small ribosomal subunit protein uS15 (93 aa).

Belongs to the universal ribosomal protein uS15 family. In terms of assembly, part of the 30S ribosomal subunit. Forms a bridge to the 50S subunit in the 70S ribosome, contacting the 23S rRNA.

In terms of biological role, one of the primary rRNA binding proteins, it binds directly to 16S rRNA where it helps nucleate assembly of the platform of the 30S subunit by binding and bridging several RNA helices of the 16S rRNA. Forms an intersubunit bridge (bridge B4) with the 23S rRNA of the 50S subunit in the ribosome. The sequence is that of Small ribosomal subunit protein uS15 from Ehrlichia ruminantium (strain Gardel).